Here is an 86-residue protein sequence, read N- to C-terminus: MKTLLLTLVVVTIVCLELGYTRKCLTKYSQDNESSKTCPSGQKLCFKKWETGKLLGTKVKRGCVATCPQPKKEWIIQCCAKDKCNK.

The N-terminal stretch at 1–21 is a signal peptide; sequence MKTLLLTLVVVTIVCLELGYT. 4 disulfide bridges follow: C24-C45, C38-C63, C67-C78, and C79-C84.

In terms of tissue distribution, expressed by the venom gland.

It is found in the secreted. This is Neurotoxin 3FTx-RK from Bungarus fasciatus (Banded krait).